The primary structure comprises 181 residues: ATP-dependent protease subunit HslV (181 aa).

Thr9 is an active-site residue. 3 residues coordinate Na(+): Ser166, Cys169, and Thr172.

Belongs to the peptidase T1B family. HslV subfamily. A double ring-shaped homohexamer of HslV is capped on each side by a ring-shaped HslU homohexamer. The assembly of the HslU/HslV complex is dependent on binding of ATP.

The protein localises to the cytoplasm. The enzyme catalyses ATP-dependent cleavage of peptide bonds with broad specificity.. Allosterically activated by HslU binding. Functionally, protease subunit of a proteasome-like degradation complex believed to be a general protein degrading machinery. The chain is ATP-dependent protease subunit HslV from Staphylococcus haemolyticus (strain JCSC1435).